The sequence spans 669 residues: Filensin (669 aa).

Residues 1-33 (MYRRSYVFQARQERYERAQPAGPAAQPGGTAPG) form a head region. S5 carries the post-translational modification Phosphoserine. In terms of domain architecture, IF rod spans 33–318 (GLAALQALGE…RIIEIEGSRL (286 aa)). The segment at 34-68 (LAALQALGERVAVQVQRARALQQRHAGLRRQLDAF) is coil 1A. A35 is subject to N-acetylalanine. The tract at residues 69-77 (QRLGEQPGP) is linker 1. Positions 78 to 177 (EDALARHVEA…RYKKNLLEIQ (100 aa)) are coil 1B. Residues 178–194 (TYITVLQQIVQTAPQVS) are linker 12. The interval 195–318 (LVTGMRESGL…RIIEIEGSRL (124 aa)) is coil 2. Residues 319–669 (SSVFIETPIS…GEKSLPDTRA (351 aa)) are tail. At S339 the chain carries Phosphoserine. Disordered regions lie at residues 380–435 (VEET…GGQI), 449–468 (RVSGHKEPEPEPPTDLFTKG), and 505–618 (HHDG…KALS). Residues 408 to 417 (SQPGAGGGHG) show a composition bias toward gly residues. G432 carries N-myristoyl glycine lipidation. Residue S513 is modified to Phosphoserine. The span at 545–570 (NGLRAKEPKDLEEKDDDGKKEAEGSR) shows a compositional bias: basic and acidic residues. Over residues 583 to 593 (PSTSHSQTSGS) the composition is skewed to polar residues. Residue T585 is modified to Phosphothreonine.

This sequence belongs to the intermediate filament family. As to quaternary structure, part of a complex required for lens intermediate filament formation composed of BFSP1, BFSP2 and CRYAA. Identified in a complex that contains VIM, EZR, AHNAK, BFSP1, BFSP2, ANK2, PLEC, PRX and spectrin. Found in a complex composed of PPL (via C-terminal linker domain), BFSP1 and BFSP2 in the retinal lens. Within the complex interacts with BFSP2. Interacts (via C-terminus) with MIP (via C-terminus) in aged lens fiber cells. In terms of processing, proteolytically cleaved during lens cell fiber differentiation with increased fragmentation as fiber cell age increases. Myristoylated at Gly-432 following proteolytic cleavage at Asp-431. Post-translationally, acetylated at Ala-35 following proteolytic cleavage at Leu-34. Detected in eye lens fiber cells (at protein level). Expressed in retinal lens epithelial cells (at protein level).

It is found in the cell membrane. It localises to the cytoplasm. The protein localises to the cytoskeleton. The protein resides in the cell cortex. Functionally, required for the correct formation of lens intermediate filaments as part of a complex composed of BFSP1, BFSP2 and CRYAA. Involved in altering the calcium regulation of MIP water permeability. The chain is Filensin (Bfsp1) from Mus musculus (Mouse).